A 112-amino-acid polypeptide reads, in one-letter code: Putative pterin-4-alpha-carbinolamine dehydratase (112 aa).

Belongs to the pterin-4-alpha-carbinolamine dehydratase family.

The enzyme catalyses (4aS,6R)-4a-hydroxy-L-erythro-5,6,7,8-tetrahydrobiopterin = (6R)-L-erythro-6,7-dihydrobiopterin + H2O. In Photobacterium profundum (strain SS9), this protein is Putative pterin-4-alpha-carbinolamine dehydratase.